Consider the following 104-residue polypeptide: Proteasome subunit beta type-8 (104 aa).

The protein belongs to the peptidase T1B family. In terms of assembly, the 26S proteasome consists of a 20S proteasome core and two 19S regulatory subunits. The 20S proteasome core is composed of 28 subunits that are arranged in four stacked rings, resulting in a barrel-shaped structure. The two end rings are each formed by seven alpha subunits, and the two central rings are each formed by seven beta subunits. The catalytic chamber with the active sites is on the inside of the barrel. Component of the immunoproteasome, where it displaces the equivalent housekeeping subunit PSMB5. Component of the spermatoproteasome, a form of the proteasome specifically found in testis. Directly interacts with POMP.

The protein localises to the cytoplasm. It is found in the nucleus. It catalyses the reaction Cleavage of peptide bonds with very broad specificity.. Functionally, the proteasome is a multicatalytic proteinase complex which is characterized by its ability to cleave peptides with Arg, Phe, Tyr, Leu, and Glu adjacent to the leaving group at neutral or slightly basic pH. The proteasome has an ATP-dependent proteolytic activity. This subunit is involved in antigen processing to generate class I binding peptides. May participate in the generation of spliced peptides resulting from the ligation of two separate proteasomal cleavage products that are not contiguous in the parental protein. Required for adipocyte differentiation. In Sus scrofa (Pig), this protein is Proteasome subunit beta type-8 (PSMB8).